The sequence spans 550 residues: Transcriptional repressor RHIT (550 aa).

Disordered stretches follow at residues 1 to 67 (MSAD…ETRA), 174 to 200 (VQGK…VVEV), and 216 to 296 (KSFK…EGLA). Basic and acidic residues-rich tracts occupy residues 11 to 22 (AQDKERARETPG), 45 to 58 (ESPH…EPHP), and 187 to 200 (LGHE…VVEV). One can recognise a KRAB domain in the interval 124-193 (VTFEDMALYL…SRQLGHEEEE (70 aa)). Residue Lys-216 forms a Glycyl lysine isopeptide (Lys-Gly) (interchain with G-Cter in SUMO2) linkage. Positions 267-281 (DLPKTQEGHFPEQPR) are enriched in basic and acidic residues. Ser-290 carries the post-translational modification Phosphoserine. 8 consecutive C2H2-type zinc fingers follow at residues 306-328 (YKCE…RRTH), 334-356 (YACT…QIIH), 362-384 (YTCP…QRIH), 390-412 (YVCD…QGTH), 418-440 (HKCP…QRTH), 446-468 (YPCP…NRTH), 474-496 (YHCL…QRTH), and 502-524 (YSCP…EKIH).

Belongs to the krueppel C2H2-type zinc-finger protein family.

The protein localises to the nucleus. Its function is as follows. Transcriptional repressor involved in regulating MPV17L expression. By regulating MPV17L expression, contributes to the regulation of genes involved in H(2)O(2) metabolism and the mitochondrial apoptotic cascade. This chain is Transcriptional repressor RHIT (ZNF205), found in Bos taurus (Bovine).